The primary structure comprises 129 residues: uncharacterized protein (129 aa).

This sequence belongs to the asfivirus C129R family.

The protein resides in the virion. Functionally, plays a role in the inhibition of type I interferon signaling pathway. Mechanistically, specifically interacts with 2',3'-cGAMP and cleaves it via its phosphodiesterase activity. In turn, prevents 2',3'-cGAMP interaction with host ER-resident STING1 leading to inhibition of downstream signaling pathway and type I interferon production. This is an uncharacterized protein from African swine fever virus (isolate Pig/Kenya/KEN-50/1950) (ASFV).